Here is a 123-residue protein sequence, read N- to C-terminus: Protein Wnt-7 (123 aa).

The O-palmitoleoyl serine; by PORCN moiety is linked to residue serine 1. 2 N-linked (GlcNAc...) asparagine glycosylation sites follow: asparagine 79 and asparagine 90. Cysteine 89 and cysteine 104 are oxidised to a cystine.

It belongs to the Wnt family. In terms of processing, palmitoleoylation is required for efficient binding to frizzled receptors. Depalmitoleoylation leads to Wnt signaling pathway inhibition.

The protein localises to the secreted. It localises to the extracellular space. It is found in the extracellular matrix. In terms of biological role, ligand for members of the frizzled family of seven transmembrane receptors. Probable developmental protein. May be a signaling molecule which affects the development of discrete regions of tissues. Is likely to signal over only few cell diameters. The sequence is that of Protein Wnt-7 (WNT-7) from Strongylocentrotus purpuratus (Purple sea urchin).